The chain runs to 769 residues: Sensor histidine kinase ComP (769 aa).

The Cytoplasmic segment spans residues 1-9; sequence MKNLIKKFT. The chain crosses the membrane as a helical span at residues 10 to 33; the sequence is IAVIVLSILYISYTTYISMNGIII. Topologically, residues 34-113 are extracellular; that stretch reads GTKIHKNDKS…DFDLVTLNRP (80 aa). The chain crosses the membrane as a helical span at residues 114–134; it reads YSFFLFVLPLFFYFLSIICIF. Residues 135–144 are Cytoplasmic-facing; it reads YILKVNKKRR. The helical transmembrane segment at 145–167 threads the bilayer; the sequence is SFAAYILILLLLDISIAYISAGG. The Extracellular portion of the chain corresponds to 168–235; it reads PFRGHIINRY…QDYLQVDIDF (68 aa). Residues 236 to 257 form a helical membrane-spanning segment; it reads LATLNLVSFATLTLFSFSAIYL. At 258–272 the chain is on the cytoplasmic side; that stretch reads HLNKYKYAEHSFILK. The chain crosses the membrane as a helical span at residues 273 to 295; sequence LLILTNTLSFAPFLIFFVLPIIF. Residues 296–299 are Extracellular-facing; sequence TGNY. Residues 300 to 323 form a helical membrane-spanning segment; it reads IFPALASASLLVLIPFGLVYQFVA. The Cytoplasmic segment spans residues 324–337; sequence NKMFDIEFILGRMR. The chain crosses the membrane as a helical span at residues 338–357; sequence YYALLAMIPTLLIVGALVLF. Topologically, residues 358-361 are extracellular; the sequence is DVMD. A helical membrane pass occupies residues 362 to 383; it reads IQMNPVRQTVFFFVVMFAVFYF. The Cytoplasmic segment spans residues 384 to 769; it reads KEVMDFKFRL…GFKADIEIEL (386 aa). Residues 571 to 769 enclose the Histidine kinase domain; the sequence is LARDLHDSVL…GFKADIEIEL (199 aa). At histidine 576 the chain carries Phosphohistidine; by autocatalysis.

Autophosphorylates on a histidine and transfers the phosphate group onto an aspartate in ComA, thus activating it.

The protein resides in the cell membrane. The catalysed reaction is ATP + protein L-histidine = ADP + protein N-phospho-L-histidine.. In terms of biological role, sensor in the two-component regulatory system ComP/ComA involved in a major quorum response pathway that regulates the development of genetic competence. Plays a role in sporulation, at least partly interchangeable with that of SpoIIJ. Probably activates ComA by phosphorylation. This chain is Sensor histidine kinase ComP (comP), found in Bacillus subtilis (strain 168).